Reading from the N-terminus, the 616-residue chain is Protein translocase subunit SecD (616 aa).

6 helical membrane passes run 11 to 31 (LMVI…IYGE), 453 to 473 (QGIN…LFYY), 475 to 495 (MFGV…VGLM), 497 to 517 (ILPG…TLGM), 547 to 569 (YNGA…IILY), and 585 to 605 (LGVA…VNAL).

This sequence belongs to the SecD/SecF family. SecD subfamily. Forms a complex with SecF. Part of the essential Sec protein translocation apparatus which comprises SecA, SecYEG and auxiliary proteins SecDF-YajC and YidC.

It is found in the cell inner membrane. Its function is as follows. Part of the Sec protein translocase complex. Interacts with the SecYEG preprotein conducting channel. SecDF uses the proton motive force (PMF) to complete protein translocation after the ATP-dependent function of SecA. This is Protein translocase subunit SecD from Haemophilus influenzae (strain ATCC 51907 / DSM 11121 / KW20 / Rd).